Consider the following 110-residue polypeptide: Small ribosomal subunit protein bS16 (110 aa).

Basic and acidic residues predominate over residues Val81–Ala104. Positions Val81 to Glu110 are disordered.

Belongs to the bacterial ribosomal protein bS16 family.

In Prochlorococcus marinus (strain NATL2A), this protein is Small ribosomal subunit protein bS16.